Consider the following 155-residue polypeptide: Ribosomal RNA large subunit methyltransferase H (155 aa).

S-adenosyl-L-methionine-binding positions include L73, G104, and 123 to 128; that span reads LSPLTL.

Belongs to the RNA methyltransferase RlmH family. As to quaternary structure, homodimer.

The protein localises to the cytoplasm. The catalysed reaction is pseudouridine(1915) in 23S rRNA + S-adenosyl-L-methionine = N(3)-methylpseudouridine(1915) in 23S rRNA + S-adenosyl-L-homocysteine + H(+). Its function is as follows. Specifically methylates the pseudouridine at position 1915 (m3Psi1915) in 23S rRNA. This chain is Ribosomal RNA large subunit methyltransferase H, found in Stutzerimonas stutzeri (strain A1501) (Pseudomonas stutzeri).